The primary structure comprises 301 residues: Protein FdhE homolog (301 aa).

This sequence belongs to the FdhE family.

It localises to the cytoplasm. Functionally, necessary for formate dehydrogenase activity. In Shewanella baltica (strain OS195), this protein is Protein FdhE homolog.